A 61-amino-acid chain; its full sequence is Sec-independent protein translocase protein TatA (61 aa).

Residues 2-22 (GLSGISPLSLLLILAIIVALF) form a helical membrane-spanning segment.

It belongs to the TatA/E family. The Tat system comprises two distinct complexes: a TatABC complex, containing multiple copies of TatA, TatB and TatC subunits, and a separate TatA complex, containing only TatA subunits. Substrates initially bind to the TatABC complex, which probably triggers association of the separate TatA complex to form the active translocon.

The protein localises to the cell inner membrane. Its function is as follows. Part of the twin-arginine translocation (Tat) system that transports large folded proteins containing a characteristic twin-arginine motif in their signal peptide across membranes. TatA could form the protein-conducting channel of the Tat system. The chain is Sec-independent protein translocase protein TatA from Legionella pneumophila (strain Corby).